The following is a 320-amino-acid chain: Uridine phosphorylase 2 (320 aa).

Phosphate is bound by residues Gly66, Arg100, and Arg144–Thr147. Cys95 and Cys102 are oxidised to a cystine. Uridine contacts are provided by residues Ser148–Gly149 and Gln223–Arg225.

This sequence belongs to the PNP/UDP phosphorylase family. Homodimer. Liver specific.

The enzyme catalyses uridine + phosphate = alpha-D-ribose 1-phosphate + uracil. It carries out the reaction 2'-deoxyuridine + phosphate = 2-deoxy-alpha-D-ribose 1-phosphate + uracil. It participates in pyrimidine metabolism; UMP biosynthesis via salvage pathway; uracil from uridine (phosphorylase route): step 1/1. A conditional disulfide bridge can form within the protein that dislocates a critical phosphate-coordinating arginine Arg-100 away from the active site, disabling the enzyme. In terms of biological role, catalyzes the reversible phosphorylytic cleavage of uridine to uracil and ribose-1-phosphate which can then be utilized as carbon and energy sources or in the rescue of pyrimidine bases for nucleotide synthesis. Shows broad substrate specificity and can also accept deoxyuridine and other analogous compounds. This chain is Uridine phosphorylase 2, found in Mus musculus (Mouse).